The sequence spans 811 residues: RFX-like DNA-binding protein RFX1 (811 aa).

Disordered stretches follow at residues 48-92 and 111-156; these read EPTS…TYLP and LLHQ…QRQP. Positions 51 to 70 are enriched in low complexity; it reads SRGSNDNSNGPSNGSSVNSN. Over residues 140-149 the composition is skewed to pro residues; it reads SPTPTQPPAQ. Serine 173 bears the Phosphoserine mark. Positions 181–222 are disordered; it reads KSEETLNNNPPTAAKRTNTFPSIPSSTKKQKTSQEKRISSIS. Residues 185–204 are compositionally biased toward polar residues; that stretch reads TLNNNPPTAAKRTNTFPSIP. A DNA-binding region (RFX-type winged-helix) is located at residues 285 to 360; it reads ALLWLMKNCK…YHYCGLKLTV (76 aa). Over residues 377 to 391 the composition is skewed to low complexity; it reads LVHNNDPISPLSSPS. The interval 377-461 is disordered; sequence LVHNNDPISP…AANNPTGTLS (85 aa). Over residues 409–428 the composition is skewed to polar residues; it reads NRKSLSRTGSPVKQSSNDNP. Over residues 434 to 445 the composition is skewed to basic and acidic residues; that stretch reads ESQHPNETEANK.

This sequence belongs to the RFX family.

This is RFX-like DNA-binding protein RFX1 (RFX1) from Saccharomyces cerevisiae (strain ATCC 204508 / S288c) (Baker's yeast).